We begin with the raw amino-acid sequence, 196 residues long: Peptidyl-tRNA hydrolase (196 aa).

Tyrosine 14 contributes to the tRNA binding site. The active-site Proton acceptor is the histidine 19. Residues tyrosine 64, asparagine 66, and asparagine 112 each coordinate tRNA.

Belongs to the PTH family. As to quaternary structure, monomer.

Its subcellular location is the cytoplasm. The enzyme catalyses an N-acyl-L-alpha-aminoacyl-tRNA + H2O = an N-acyl-L-amino acid + a tRNA + H(+). In terms of biological role, hydrolyzes ribosome-free peptidyl-tRNAs (with 1 or more amino acids incorporated), which drop off the ribosome during protein synthesis, or as a result of ribosome stalling. Its function is as follows. Catalyzes the release of premature peptidyl moieties from peptidyl-tRNA molecules trapped in stalled 50S ribosomal subunits, and thus maintains levels of free tRNAs and 50S ribosomes. In Methylocella silvestris (strain DSM 15510 / CIP 108128 / LMG 27833 / NCIMB 13906 / BL2), this protein is Peptidyl-tRNA hydrolase.